The primary structure comprises 360 residues: DNA replication and repair protein RecF (360 aa).

30–37 provides a ligand contact to ATP; that stretch reads GRNAQGKT.

This sequence belongs to the RecF family.

It localises to the cytoplasm. Its function is as follows. The RecF protein is involved in DNA metabolism; it is required for DNA replication and normal SOS inducibility. RecF binds preferentially to single-stranded, linear DNA. It also seems to bind ATP. The polypeptide is DNA replication and repair protein RecF (Desulforudis audaxviator (strain MP104C)).